The sequence spans 416 residues: Tyrosine permease (416 aa).

The next 11 helical transmembrane spans lie at 13-33 (GTML…PIAM), 34-54 (AGIW…MMLL), 86-106 (VVVG…YISG), 127-147 (LSVI…SLLV), 153-173 (VLII…IWHV), 192-212 (LPYI…HGNV), 231-251 (IFIG…VTMG), 260-280 (PIIA…GLFT), 286-306 (LILT…ATLG), 337-357 (VVCF…GLAF), and 389-409 (ILNL…LDVF).

Belongs to the amino acid/polyamine transporter 2 family. Mtr/TnaB/TyrP permease subfamily.

Its subcellular location is the cell inner membrane. The polypeptide is Tyrosine permease (tutB) (Enterobacter agglomerans (Erwinia herbicola)).